The primary structure comprises 179 residues: Large ribosomal subunit protein uL6 (179 aa).

It belongs to the universal ribosomal protein uL6 family. In terms of assembly, part of the 50S ribosomal subunit.

Its function is as follows. This protein binds to the 23S rRNA, and is important in its secondary structure. It is located near the subunit interface in the base of the L7/L12 stalk, and near the tRNA binding site of the peptidyltransferase center. In Synechococcus sp. (strain RCC307), this protein is Large ribosomal subunit protein uL6.